The chain runs to 370 residues: Actin-related protein 2/3 complex subunit 1A-B (370 aa).

WD repeat units follow at residues 6-45 (FLLE…WVKC), 50-89 (EHNG…WKPT), 140-179 (PIRS…VDEK), 202-241 (SSGG…SVSQ), 244-284 (TEFL…TFVS), and 322-365 (LHQN…SYIQ).

Belongs to the WD repeat ARPC1 family. Component of the Arp2/3 complex.

It is found in the cytoplasm. It localises to the cytoskeleton. Its subcellular location is the nucleus. Probably functions as a component of the Arp2/3 complex which is involved in regulation of actin polymerization and together with an activating nucleation-promoting factor (NPF) mediates the formation of branched actin networks. In addition to its role in the cytoplasmic cytoskeleton, the Arp2/3 complex also promotes actin polymerization in the nucleus, thereby regulating gene transcription and repair of damaged DNA. This Xenopus laevis (African clawed frog) protein is Actin-related protein 2/3 complex subunit 1A-B (arpc1a-b).